A 386-amino-acid polypeptide reads, in one-letter code: 1-deoxy-D-xylulose 5-phosphate reductoisomerase (386 aa).

6 residues coordinate NADPH: Ser10, Gly11, Ser12, Val13, Asn38, and Asn120. Lys121 is a binding site for 1-deoxy-D-xylulose 5-phosphate. Glu122 lines the NADPH pocket. A Mn(2+)-binding site is contributed by Asp146. Positions 147, 148, 172, and 195 each coordinate 1-deoxy-D-xylulose 5-phosphate. Glu148 serves as a coordination point for Mn(2+). Gly201 contributes to the NADPH binding site. 4 residues coordinate 1-deoxy-D-xylulose 5-phosphate: Ser208, Asn213, Lys214, and Glu217. Glu217 serves as a coordination point for Mn(2+).

It belongs to the DXR family. The cofactor is Mg(2+). Mn(2+) serves as cofactor.

It carries out the reaction 2-C-methyl-D-erythritol 4-phosphate + NADP(+) = 1-deoxy-D-xylulose 5-phosphate + NADPH + H(+). The protein operates within isoprenoid biosynthesis; isopentenyl diphosphate biosynthesis via DXP pathway; isopentenyl diphosphate from 1-deoxy-D-xylulose 5-phosphate: step 1/6. In terms of biological role, catalyzes the NADPH-dependent rearrangement and reduction of 1-deoxy-D-xylulose-5-phosphate (DXP) to 2-C-methyl-D-erythritol 4-phosphate (MEP). This chain is 1-deoxy-D-xylulose 5-phosphate reductoisomerase, found in Leptospira biflexa serovar Patoc (strain Patoc 1 / Ames).